The chain runs to 477 residues: Pentatricopeptide repeat-containing protein At1g55630 (477 aa).

PPR repeat units follow at residues 151-185 (TANCYHLLMKIFAECGEYKAMCRLIDEMIKDGYPT), 186-220 (TACTFNLLICTCGEAGLARDVVEQFIKSKTFNYRP), 221-255 (YKHSYNAILHSLLGVKQYKLIDWVYEQMLEDGFTP), 256-290 (DVLTYNIVMFANFRLGKTDRLYRLLDEMVKDGFSP), 291-325 (DLYTYNILLHHLATGNKPLAALNLLNHMREVGVEP), 326-360 (GVIHFTTLIDGLSRAGKLEACKYFMDETVKVGCTP), 361-395 (DVVCYTVMITGYISGGELEKAEEMFKEMTEKGQLP), 396-430 (NVFTYNSMIRGFCMAGKFKEACALLKEMESRGCNP), and 431-465 (NFVVYSTLVNNLKNAGKVLEAHEVVKDMVEKGHYV).

This sequence belongs to the PPR family. P subfamily.

The protein is Pentatricopeptide repeat-containing protein At1g55630 of Arabidopsis thaliana (Mouse-ear cress).